The following is a 73-amino-acid chain: UPF0150 protein ssl0259 (73 aa).

This sequence belongs to the UPF0150 family.

This chain is UPF0150 protein ssl0259, found in Synechocystis sp. (strain ATCC 27184 / PCC 6803 / Kazusa).